Consider the following 235-residue polypeptide: Probable transcriptional regulatory protein MPN_478 (235 aa).

It belongs to the TACO1 family.

The protein resides in the cytoplasm. The polypeptide is Probable transcriptional regulatory protein MPN_478 (Mycoplasma pneumoniae (strain ATCC 29342 / M129 / Subtype 1) (Mycoplasmoides pneumoniae)).